Reading from the N-terminus, the 351-residue chain is GDSL esterase/lipase At3g53100 (351 aa).

An N-terminal signal peptide occupies residues 1–24; the sequence is MQKMRVSGFRVLLLVSCFFCKSKG. Ser36 serves as the catalytic Nucleophile. N-linked (GlcNAc...) asparagine glycosylation is found at Asn234, Asn254, and Asn318. Catalysis depends on residues Asp326 and His329.

Belongs to the 'GDSL' lipolytic enzyme family.

Its subcellular location is the secreted. In Arabidopsis thaliana (Mouse-ear cress), this protein is GDSL esterase/lipase At3g53100.